A 206-amino-acid polypeptide reads, in one-letter code: MAAAVLGQLGALWIHNLRSRGKLALGVLPQSYIHTSASLDISRKWEKKNKIVYPPQLPGEPRRPAEIYHCRRQIKYSKDKMWYLAKLIRGMSIDQALAQLEFNDKKGAKIIKEVLLEAQDMAVRDHNVEFRSNLYIAESTSGRGQCLKRIRYHGRGRFGIMEKVYCHYFVKLVEGPPPPPEPPKTAVAHAKEYIQQLRSRTIVHTL.

Residues 1 to 40 constitute a mitochondrion transit peptide; sequence MAAAVLGQLGALWIHNLRSRGKLALGVLPQSYIHTSASLD.

This sequence belongs to the universal ribosomal protein uL22 family. In terms of assembly, component of the mitochondrial large ribosomal subunit (mt-LSU). Mature mammalian 55S mitochondrial ribosomes consist of a small (28S) and a large (39S) subunit. The 28S small subunit contains a 12S ribosomal RNA (12S mt-rRNA) and 30 different proteins. The 39S large subunit contains a 16S rRNA (16S mt-rRNA), a copy of mitochondrial valine transfer RNA (mt-tRNA(Val)), which plays an integral structural role, and 52 different proteins.

It localises to the mitochondrion. This is Large ribosomal subunit protein uL22m (MRPL22) from Homo sapiens (Human).